The following is a 174-amino-acid chain: Ribosome maturation factor RimM (174 aa).

In terms of domain architecture, PRC barrel spans 96–170 (PDEFYDHELE…YVVIDPPEGL (75 aa)).

The protein belongs to the RimM family. Binds ribosomal protein uS19.

Its subcellular location is the cytoplasm. An accessory protein needed during the final step in the assembly of 30S ribosomal subunit, possibly for assembly of the head region. Essential for efficient processing of 16S rRNA. May be needed both before and after RbfA during the maturation of 16S rRNA. It has affinity for free ribosomal 30S subunits but not for 70S ribosomes. The chain is Ribosome maturation factor RimM from Nocardia farcinica (strain IFM 10152).